A 301-amino-acid chain; its full sequence is F-box protein At4g02733 (301 aa).

The F-box domain occupies 91 to 146; that stretch reads NSISWFLPSELTVKVFSMVDTKSLMQASACCTMFNNCAMDPLCYFHIDLTKAFKHV.

This Arabidopsis thaliana (Mouse-ear cress) protein is F-box protein At4g02733.